A 386-amino-acid chain; its full sequence is Methylthioribose-1-phosphate isomerase (386 aa).

Asp255 serves as the catalytic Proton donor.

This sequence belongs to the eIF-2B alpha/beta/delta subunits family. MtnA subfamily.

It is found in the cytoplasm. Its subcellular location is the nucleus. The enzyme catalyses 5-(methylsulfanyl)-alpha-D-ribose 1-phosphate = 5-(methylsulfanyl)-D-ribulose 1-phosphate. Its pathway is amino-acid biosynthesis; L-methionine biosynthesis via salvage pathway; L-methionine from S-methyl-5-thio-alpha-D-ribose 1-phosphate: step 1/6. Its function is as follows. Catalyzes the interconversion of methylthioribose-1-phosphate (MTR-1-P) into methylthioribulose-1-phosphate (MTRu-1-P). This is Methylthioribose-1-phosphate isomerase from Trypanosoma brucei brucei (strain 927/4 GUTat10.1).